Consider the following 314-residue polypeptide: tRNA uridine(34) hydroxylase (314 aa).

Residues 140–234 (ARDDVILIDT…YLEETPPDES (95 aa)) enclose the Rhodanese domain. Cysteine 194 acts as the Cysteine persulfide intermediate in catalysis.

Belongs to the TrhO family.

The catalysed reaction is uridine(34) in tRNA + AH2 + O2 = 5-hydroxyuridine(34) in tRNA + A + H2O. In terms of biological role, catalyzes oxygen-dependent 5-hydroxyuridine (ho5U) modification at position 34 in tRNAs. In Acinetobacter baumannii (strain AYE), this protein is tRNA uridine(34) hydroxylase.